A 382-amino-acid chain; its full sequence is Inactive serine protease 54 (382 aa).

The first 20 residues, Met-1 to Ala-20, serve as a signal peptide directing secretion. The Peptidase S1 domain occupies Ile-29–Arg-258. Asn-113 carries N-linked (GlcNAc...) asparagine glycosylation. Cystine bridges form between Cys-154/Cys-216, Cys-185/Cys-195, and Cys-206/Cys-237.

Belongs to the peptidase S1 family. Plasma kallikrein subfamily.

The protein localises to the secreted. The chain is Inactive serine protease 54 (Prss54) from Rattus norvegicus (Rat).